A 231-amino-acid chain; its full sequence is MKRAVVVFSGGQDSTTCLVQALQQYDEVHCVTFDYGQRHRAEIDVARELALKLGARAHKVLDVTLLNELAVSSLTRDSIPVPDYEPEADGIPNTFVPGRNILFLTLAAIYAYQVKAEAVITGVCETDFSGYPDCRDEFVKALNHAVSLGMAKDIRFETPLMWIDKAETWALADYYGKLDLVRNETLTCYNGFKGDGCGHCAACNLRANGLNHYLADKPTVMAAMKQKTGLR.

ATP is bound at residue Phe8–Leu18. 4 residues coordinate Zn(2+): Cys188, Cys197, Cys200, and Cys203.

It belongs to the QueC family. The cofactor is Zn(2+).

It carries out the reaction 7-carboxy-7-deazaguanine + NH4(+) + ATP = 7-cyano-7-deazaguanine + ADP + phosphate + H2O + H(+). Its pathway is purine metabolism; 7-cyano-7-deazaguanine biosynthesis. Its function is as follows. Catalyzes the ATP-dependent conversion of 7-carboxy-7-deazaguanine (CDG) to 7-cyano-7-deazaguanine (preQ(0)). The polypeptide is 7-cyano-7-deazaguanine synthase (queC) (Escherichia coli (strain K12)).